Consider the following 531-residue polypeptide: RCC1 and BTB domain-containing protein 1 (531 aa).

RCC1 repeat units follow at residues 40–91 (NDEV…LLTT), 93–145 (DGVV…ALAA), 147–198 (GELF…AVLD), 199–250 (SGEV…ALTD), 252–302 (GLLY…AAKT), and 304–356 (GGHV…FLTV). 2 BTB domains span residues 370–437 (ADLK…DLPP) and 470–499 (ENAF…INHL).

As to expression, in the retina, mainly expressed in the inner retina with strong signals reaching up to the outer plexiform layer (at protein level).

It is found in the nucleus. Its function is as follows. May be involved in cell cycle regulation by chromatin remodeling. The polypeptide is RCC1 and BTB domain-containing protein 1 (Rcbtb1) (Mus musculus (Mouse)).